The following is a 275-amino-acid chain: Formamidopyrimidine-DNA glycosylase (275 aa).

Pro-2 serves as the catalytic Schiff-base intermediate with DNA. Glu-3 serves as the catalytic Proton donor. The Proton donor; for beta-elimination activity role is filled by Lys-58. His-93, Arg-111, and Arg-156 together coordinate DNA. Residues Phe-241–Arg-275 form an FPG-type zinc finger. Arg-265 acts as the Proton donor; for delta-elimination activity in catalysis.

The protein belongs to the FPG family. As to quaternary structure, monomer. It depends on Zn(2+) as a cofactor.

It catalyses the reaction Hydrolysis of DNA containing ring-opened 7-methylguanine residues, releasing 2,6-diamino-4-hydroxy-5-(N-methyl)formamidopyrimidine.. It carries out the reaction 2'-deoxyribonucleotide-(2'-deoxyribose 5'-phosphate)-2'-deoxyribonucleotide-DNA = a 3'-end 2'-deoxyribonucleotide-(2,3-dehydro-2,3-deoxyribose 5'-phosphate)-DNA + a 5'-end 5'-phospho-2'-deoxyribonucleoside-DNA + H(+). In terms of biological role, involved in base excision repair of DNA damaged by oxidation or by mutagenic agents. Acts as a DNA glycosylase that recognizes and removes damaged bases. Has a preference for oxidized purines, such as 7,8-dihydro-8-oxoguanine (8-oxoG). Has AP (apurinic/apyrimidinic) lyase activity and introduces nicks in the DNA strand. Cleaves the DNA backbone by beta-delta elimination to generate a single-strand break at the site of the removed base with both 3'- and 5'-phosphates. The chain is Formamidopyrimidine-DNA glycosylase from Burkholderia cenocepacia (strain HI2424).